The chain runs to 362 residues: Phospho-N-acetylmuramoyl-pentapeptide-transferase (362 aa).

Helical transmembrane passes span 28–48, 73–93, 100–120, 134–154, 169–189, 201–221, 241–261, 264–284, 290–310, and 339–359; these read GATV…IALL, TPTM…LLWA, VWIV…DDYL, VKLF…VLVS, TLLI…IVGS, GLAI…VYLV, LAVF…YNAP, MVFM…AIAV, LVLA…IVQV, and TVVV…LATL.

This sequence belongs to the glycosyltransferase 4 family. MraY subfamily. Mg(2+) is required as a cofactor.

Its subcellular location is the cell inner membrane. The catalysed reaction is UDP-N-acetyl-alpha-D-muramoyl-L-alanyl-gamma-D-glutamyl-meso-2,6-diaminopimeloyl-D-alanyl-D-alanine + di-trans,octa-cis-undecaprenyl phosphate = di-trans,octa-cis-undecaprenyl diphospho-N-acetyl-alpha-D-muramoyl-L-alanyl-D-glutamyl-meso-2,6-diaminopimeloyl-D-alanyl-D-alanine + UMP. The protein operates within cell wall biogenesis; peptidoglycan biosynthesis. In terms of biological role, catalyzes the initial step of the lipid cycle reactions in the biosynthesis of the cell wall peptidoglycan: transfers peptidoglycan precursor phospho-MurNAc-pentapeptide from UDP-MurNAc-pentapeptide onto the lipid carrier undecaprenyl phosphate, yielding undecaprenyl-pyrophosphoryl-MurNAc-pentapeptide, known as lipid I. The protein is Phospho-N-acetylmuramoyl-pentapeptide-transferase of Parvibaculum lavamentivorans (strain DS-1 / DSM 13023 / NCIMB 13966).